Consider the following 511-residue polypeptide: Bifunctional purine biosynthesis protein PurH (511 aa).

The MGS-like domain occupies 1–145; sequence MKKRALVSVS…KNHKFVSVIV (145 aa).

This sequence belongs to the PurH family.

It catalyses the reaction (6R)-10-formyltetrahydrofolate + 5-amino-1-(5-phospho-beta-D-ribosyl)imidazole-4-carboxamide = 5-formamido-1-(5-phospho-D-ribosyl)imidazole-4-carboxamide + (6S)-5,6,7,8-tetrahydrofolate. The enzyme catalyses IMP + H2O = 5-formamido-1-(5-phospho-D-ribosyl)imidazole-4-carboxamide. It functions in the pathway purine metabolism; IMP biosynthesis via de novo pathway; 5-formamido-1-(5-phospho-D-ribosyl)imidazole-4-carboxamide from 5-amino-1-(5-phospho-D-ribosyl)imidazole-4-carboxamide (10-formyl THF route): step 1/1. The protein operates within purine metabolism; IMP biosynthesis via de novo pathway; IMP from 5-formamido-1-(5-phospho-D-ribosyl)imidazole-4-carboxamide: step 1/1. The chain is Bifunctional purine biosynthesis protein PurH from Bacillus cereus (strain ATCC 14579 / DSM 31 / CCUG 7414 / JCM 2152 / NBRC 15305 / NCIMB 9373 / NCTC 2599 / NRRL B-3711).